Consider the following 43-residue polypeptide: MPPKKKKVTGLIKLQIQAGAATTAPPVGPALGQHGVNIMEFCK.

This sequence belongs to the universal ribosomal protein uL11 family. As to quaternary structure, part of the ribosomal stalk of the 50S ribosomal subunit. Interacts with L10 and the large rRNA to form the base of the stalk. L10 forms an elongated spine to which L12 dimers bind in a sequential fashion forming a multimeric L10(L12)X complex. Post-translationally, one or more lysine residues are methylated.

Functionally, forms part of the ribosomal stalk which helps the ribosome interact with GTP-bound translation factors. This Streptomyces galbus protein is Large ribosomal subunit protein uL11 (rplK).